The chain runs to 288 residues: Probable aquaporin PIP1-2 (288 aa).

A disordered region spans residues 1-37; that stretch reads MEGKEEDVRLGANKFSERQPIGTAAQGSDDKDYKEPP. The next 2 membrane-spanning stretches (helical) occupy residues 57 to 77 and 92 to 114; these read IAEFMATFLFLYITVLTVMGV and IAWSFGGMIFALVYCTAGISGGH. Residues 116–118 carry the NPA 1 motif; sequence NPA. 3 consecutive transmembrane segments (helical) span residues 135–155, 177–197, and 211–231; these read LFYMVMQCLGAICGAGVVKGF, GDGLGAEIVGTFILVYTVFSA, and ILAPLPIGFAVFLVHLATIPI. The short motif at 237–239 is the NPA 2 element; that stretch reads NPA. Residues 259–279 form a helical membrane-spanning segment; sequence IFWVGPFIGAALAAIYHQVVI.

It belongs to the MIP/aquaporin (TC 1.A.8) family. PIP (TC 1.A.8.11) subfamily. As to expression, expressed in roots, leaves and anthers.

Its subcellular location is the cell membrane. Its function is as follows. Aquaporins facilitate the transport of water and small neutral solutes across cell membranes. The sequence is that of Probable aquaporin PIP1-2 (PIP1-2) from Oryza sativa subsp. japonica (Rice).